Here is a 1366-residue protein sequence, read N- to C-terminus: MNQYHIYEAIGHGKCSTVYKGRKKKTIEYFACKSVDKSRKNKVLQEVRILHSLNHPNVLKFYAWYETSAHMWLVLEYCVGGDLRTLLQQDCKLPEESIYGLAYDLVIALQYLHSKGIIYCDLKPSNILLDENGHIKLCDFGLSRKLDDISKSPSTGKRGTPYYMAPELYEDGGIHSFASDLWALGCVLYECYTGRPPFVAREFTQLVKSIHSDPTPPLPGNASRSFVNLIESLLIKDPAQRIQWADLCGHAFWKSKINLVQLPTQPAFDDMIGINTKPCLSERNGDRPNKTPPKYREKDRKGGSKQNENSIQGSKGHETPIKGTPGGSKAQAKLPSRATEEKHGGRPAANRQVNILRLSRIAKANLQKENEKENYRRPLPNSNENCAEVKIDNTDMELDFDENNDDEGPDESEGTENTSCAQEERVMSHNENHRRQRVVSSNVPDENSSANETPTLGEARDCHEDQSEPMDMSAAPPSASPQLKTHRGRETSGVAVNHDSSKAPTSLTDVFWHISDLSVRPVMPSRKSDKEAVHSLSFETPQPSDFSKKGKQELEPLNNRIITVLSGSSSGLSEKQNLIRYLETLSTNADAANILTNGPIMLVLVKVLRLSKTPAFRVQIASLIGLLIRHSTSIEDDLANSGILDSLTNGLRDKHEKVRRFSMAALGELLFYISTQNEHKDFKPPESPSKETRSASGWQVSNALISLVSSVLRKGEDDLTQVYALRTIENICSQGAYWATRFSSQDLISNLCYIYKATGKQESMRQTAGSCLVRLARFNPPCIQTVVEKLSLKEIASSFVKGSAREQQVCLNLLNMAMIGSHTFTSFGRHLVTLTEEKNLFPSLLSIIEQGTEVLRGKALLFVAFLCKNSRRWLTNFFCNARFLPVVDRLAKEKDSYLQQCLEAFVNVIASIIPGMLDTITNDIQQLMTGRRHGPVSPLNSRAPVKTNAHLFPVVLHLLGSSSFKNKMVTPQVLRQLANLTKLVEASFQGRDDFRVTLLQVLECITGDAPLVTQNGEIIIREILPSLAAIYNGNKDGDARFLCLKIWFDSLTILLTECTEIEQQISEDLKSISNSHFLPLYPALIQDEDPIPAYAQKLLVMLVEFDYIKISNLLRHNTVSQCFEFLLGDLSSANVNNVKLCLALASAPEMESKLLSQLKVVRRIGNLLEFVNAKDMEDFLEPTLSLCRAFLLRSLGNKKGLSSNYTKEPTLLSEASFTFEVDPQECIRDIADFGSNIGLFLHFAGLDDDTSIAVADIASECVVLLLKAASREATTGFLTNLPKITPILDSWRRRKSTELHLLVLKRVLHCLGYACKQYLSQAMILSISGHDVSKINAIVSEMKNSDAAGLNSIASLVAMELQRLPR.

Residues 10–18 (IGHGKCSTV) and K33 contribute to the ATP site. Catalysis depends on D121, which acts as the Proton acceptor. 4 disordered regions span residues 276–356 (TKPC…VNIL), 367–386 (QKEN…NENC), 398–502 (LDFD…DSSK), and 524–549 (PSRK…FSKK). The segment covering 283–302 (RNGDRPNKTPPKYREKDRKG) has biased composition (basic and acidic residues). Polar residues predominate over residues 304-313 (SKQNENSIQG). Positions 367–376 (QKENEKENYR) are enriched in basic and acidic residues. Over residues 398–414 (LDFDENNDDEGPDESEG) the composition is skewed to acidic residues. A compositionally biased stretch (basic and acidic residues) spans 422-433 (QEERVMSHNENH). Residues 438-454 (VVSSNVPDENSSANETP) show a composition bias toward polar residues. 12 HEAT repeats span residues 595 to 633 (LTNG…HSTS), 638 to 675 (LANS…YIST), 699 to 737 (QVSN…QGAY), 835 to 872 (TEEK…NSRR), 878 to 907 (FCNA…AFVN), 908 to 945 (VIAS…RAPV), 946 to 986 (KTNA…LVEA), 992 to 1018 (DDFR…NGEI), 1019 to 1057 (IIRE…LLTE), 1072 to 1111 (ISNS…IKIS), 1279 to 1316 (TNLP…YACK), and 1329 to 1366 (GHDV…RLPR).

It belongs to the protein kinase superfamily. Ser/Thr protein kinase family. As to quaternary structure, binds to microtubules (MT). Expressed in proliferating tissues of seedlings, lateral roots, young rosette leaves, siliques, flowers, embryos and stems (including apical meristem).

Its subcellular location is the cytoplasm. The protein resides in the cytoskeleton. The protein localises to the phragmoplast. It is found in the spindle. It carries out the reaction L-seryl-[protein] + ATP = O-phospho-L-seryl-[protein] + ADP + H(+). The enzyme catalyses L-threonyl-[protein] + ATP = O-phospho-L-threonyl-[protein] + ADP + H(+). Its function is as follows. Essential protein that regulates phragmoplast microtubule organization during cell plate expansion in cytokinesis during cell division, both somatic and syncytial. Required for endosperm cellularisation. In pollen development, involved in cellularisation during microsporogenesis by regulating radial microtubules (MT) organization in microspore mother cells. Seems to not have kinase activity. The protein is Serine/threonine-protein kinase RUNKEL of Arabidopsis thaliana (Mouse-ear cress).